Consider the following 236-residue polypeptide: Coat protein (236 aa).

A disordered region spans residues 1–27; the sequence is MTTPANTTQAVGSTKSTTTTTAGATPA. Positions 7-27 are enriched in low complexity; it reads TTQAVGSTKSTTTTTAGATPA.

It belongs to the potexvirus capsid protein family.

It is found in the virion. In terms of biological role, required for genome encapsidation. Forms ribonucleoprotein complexes along with TGB1 helicase and viral RNA. The protein is Coat protein of Brassica campestris (Field mustard).